The primary structure comprises 103 residues: ATP synthase F(0) complex subunit g, mitochondrial (103 aa).

Ala-2 bears the N-acetylalanine mark. N6-acetyllysine is present on residues Lys-11, Lys-24, Lys-35, and Lys-54.

In terms of assembly, component of the ATP synthase complex composed at least of ATP5F1A/subunit alpha, ATP5F1B/subunit beta, ATP5MC1/subunit c (homooctomer), MT-ATP6/subunit a, MT-ATP8/subunit 8, ATP5ME/subunit e, ATP5MF/subunit f, ATP5MG/subunit g, ATP5MK/subunit k, ATP5MJ/subunit j, ATP5F1C/subunit gamma, ATP5F1D/subunit delta, ATP5F1E/subunit epsilon, ATP5PF/subunit F6, ATP5PB/subunit b, ATP5PD/subunit d, ATP5PO/subunit OSCP. ATP synthase complex consists of a soluble F(1) head domain (subunits alpha(3) and beta(3)) - the catalytic core - and a membrane F(0) domain - the membrane proton channel (subunits c, a, 8, e, f, g, k and j). These two domains are linked by a central stalk (subunits gamma, delta, and epsilon) rotating inside the F1 region and a stationary peripheral stalk (subunits F6, b, d, and OSCP).

It is found in the mitochondrion. The protein localises to the mitochondrion inner membrane. In terms of biological role, subunit g, of the mitochondrial membrane ATP synthase complex (F(1)F(0) ATP synthase or Complex V) that produces ATP from ADP in the presence of a proton gradient across the membrane which is generated by electron transport complexes of the respiratory chain. ATP synthase complex consist of a soluble F(1) head domain - the catalytic core - and a membrane F(1) domain - the membrane proton channel. These two domains are linked by a central stalk rotating inside the F(1) region and a stationary peripheral stalk. During catalysis, ATP synthesis in the catalytic domain of F(1) is coupled via a rotary mechanism of the central stalk subunits to proton translocation. In vivo, can only synthesize ATP although its ATP hydrolase activity can be activated artificially in vitro. Part of the complex F(0) domain. This chain is ATP synthase F(0) complex subunit g, mitochondrial, found in Bos taurus (Bovine).